The primary structure comprises 143 residues: Ribulose bisphosphate carboxylase large chain (143 aa).

Positions 1-2 (MS) are excised as a propeptide. Pro-3 bears the N-acetylproline mark. Lys-14 is subject to N6,N6,N6-trimethyllysine. Residue Xaa-123 participates in substrate binding.

This sequence belongs to the RuBisCO large chain family. Type I subfamily. In terms of assembly, heterohexadecamer of 8 large chains and 8 small chains.

It is found in the plastid. It localises to the chloroplast. It catalyses the reaction 2 (2R)-3-phosphoglycerate + 2 H(+) = D-ribulose 1,5-bisphosphate + CO2 + H2O. It carries out the reaction D-ribulose 1,5-bisphosphate + O2 = 2-phosphoglycolate + (2R)-3-phosphoglycerate + 2 H(+). Functionally, ruBisCO catalyzes two reactions: the carboxylation of D-ribulose 1,5-bisphosphate, the primary event in carbon dioxide fixation, as well as the oxidative fragmentation of the pentose substrate in the photorespiration process. Both reactions occur simultaneously and in competition at the same active site. The chain is Ribulose bisphosphate carboxylase large chain (rbcL) from Nemopanthus mucronatus (Catberry).